A 450-amino-acid chain; its full sequence is Tubulin beta-3 chain (450 aa).

An MREI motif motif is present at residues 1–4 (MREI). GDP-binding residues include glycine 10, glutamine 11, cysteine 12, and glutamine 15. Glutamine 11 is a binding site for GTP. Glutamate 69 serves as a coordination point for GTP. Position 69 (glutamate 69) interacts with Mg(2+). Asparagine 99, serine 138, glycine 142, threonine 143, and glycine 144 together coordinate GDP. Serine 138, glycine 142, threonine 143, and glycine 144 together coordinate GTP. Position 172 is a phosphoserine; by CDK1 (serine 172). Residues aspartate 177, asparagine 204, tyrosine 222, and asparagine 226 each coordinate GDP. A GTP-binding site is contributed by asparagine 204. Asparagine 226 lines the GTP pocket. The disordered stretch occupies residues 425–450 (YQDATAEEEGEMYEDDEEESEAQGPK). A compositionally biased stretch (acidic residues) spans 429-450 (TAEEEGEMYEDDEEESEAQGPK). Glutamate 438 bears the 5-glutamyl polyglutamate mark. Position 444 is a phosphoserine (serine 444).

The protein belongs to the tubulin family. As to quaternary structure, heterodimer of alpha- and beta-tubulin. A typical microtubule is a hollow water-filled tube with an outer diameter of 25 nm and an inner diameter of 15 nM. Alpha-beta heterodimers associate head-to-tail to form protofilaments running lengthwise along the microtubule wall with the beta-tubulin subunit facing the microtubule plus end conferring a structural polarity. Microtubules usually have 13 protofilaments but different protofilament numbers can be found in some organisms and specialized cells. Interacts with gamma-tubulin; the interaction allows microtubules to nucleate from the gamma-tubulin ring complex (gTuRC). Interacts with UNC5C (via cytoplasmic domain); this interaction is decreased by NTN1/Netrin-1. Interacts with NLRP5/MATER at cytoskeleton microtubules. Interacts with DPYSL5. Interacts with CFAP61. Mg(2+) is required as a cofactor. Post-translationally, some glutamate residues at the C-terminus are polyglutamylated, resulting in polyglutamate chains on the gamma-carboxyl group. Polyglutamylation plays a key role in microtubule severing by spastin (SPAST). SPAST preferentially recognizes and acts on microtubules decorated with short polyglutamate tails: severing activity by SPAST increases as the number of glutamates per tubulin rises from one to eight, but decreases beyond this glutamylation threshold. Glutamylation is also involved in cilia motility. In terms of processing, some glutamate residues at the C-terminus are monoglycylated but not polyglycylated due to the absence of functional TTLL10 in human. Monoglycylation is mainly limited to tubulin incorporated into cilia and flagella axonemes, which is required for their stability and maintenance. Flagella glycylation controls sperm motility. Both polyglutamylation and monoglycylation can coexist on the same protein on adjacent residues, and lowering glycylation levels increases polyglutamylation, and reciprocally. Phosphorylated on Ser-172 by CDK1 during the cell cycle, from metaphase to telophase, but not in interphase. This phosphorylation inhibits tubulin incorporation into microtubules. Expression is primarily restricted to central and peripheral nervous system. Greatly increased expression in most cancerous tissues.

It is found in the cytoplasm. The protein resides in the cytoskeleton. The protein localises to the cell projection. Its subcellular location is the growth cone. It localises to the lamellipodium. It is found in the filopodium. Tubulin is the major constituent of microtubules, protein filaments consisting of alpha- and beta-tubulin heterodimers. Microtubules grow by the addition of GTP-tubulin dimers to the microtubule end, where a stabilizing cap forms. Below the cap, alpha-beta tubulin heterodimers are in GDP-bound state, owing to GTPase activity of alpha-tubulin. TUBB3 plays a critical role in proper axon guidance and maintenance. Binding of NTN1/Netrin-1 to its receptor UNC5C might cause dissociation of UNC5C from polymerized TUBB3 in microtubules and thereby lead to increased microtubule dynamics and axon repulsion. Plays a role in dorsal root ganglion axon projection towards the spinal cord. The sequence is that of Tubulin beta-3 chain (TUBB3) from Homo sapiens (Human).